The primary structure comprises 954 residues: Glycine dehydrogenase (decarboxylating) (954 aa).

Lys704 bears the N6-(pyridoxal phosphate)lysine mark.

It belongs to the GcvP family. In terms of assembly, the glycine cleavage system is composed of four proteins: P, T, L and H. Pyridoxal 5'-phosphate is required as a cofactor.

The catalysed reaction is N(6)-[(R)-lipoyl]-L-lysyl-[glycine-cleavage complex H protein] + glycine + H(+) = N(6)-[(R)-S(8)-aminomethyldihydrolipoyl]-L-lysyl-[glycine-cleavage complex H protein] + CO2. In terms of biological role, the glycine cleavage system catalyzes the degradation of glycine. The P protein binds the alpha-amino group of glycine through its pyridoxal phosphate cofactor; CO(2) is released and the remaining methylamine moiety is then transferred to the lipoamide cofactor of the H protein. The protein is Glycine dehydrogenase (decarboxylating) of Rhizobium etli (strain ATCC 51251 / DSM 11541 / JCM 21823 / NBRC 15573 / CFN 42).